The sequence spans 311 residues: LOB domain-containing protein 10 (311 aa).

The LOB domain occupies threonine 4–leucine 105. The segment covering leucine 264–leucine 277 has biased composition (low complexity). Residues leucine 264–phenylalanine 311 form a disordered region. Residues histidine 287 to glutamate 296 show a composition bias toward acidic residues. Basic and acidic residues predominate over residues proline 297 to phenylalanine 311.

Belongs to the LOB domain-containing protein family.

The sequence is that of LOB domain-containing protein 10 (LBD10) from Arabidopsis thaliana (Mouse-ear cress).